The primary structure comprises 408 residues: Hepatocyte nuclear factor 4-gamma (408 aa).

The nuclear receptor DNA-binding region spans 9-84; sequence NCLCAICGDR…AGMKKEAVQN (76 aa). 2 consecutive NR C4-type zinc fingers follow at residues 12–32 and 48–72; these read CAICGDRATGKHYGASSCDGC and CRFSRQCVVDKDKRNQCRYCRLRKC. Ser94 carries the post-translational modification Phosphoserine. Residues 99 to 328 form the NR LBD domain; that stretch reads SNIPSINTLA…NLLQEMLLGG (230 aa). The disordered stretch occupies residues 368–390; sequence ISTPETPLPSPPQGSGQEQYKIA. 2 positions are modified to phosphothreonine: Thr370 and Thr373. Ser377 bears the Phosphoserine mark.

The protein belongs to the nuclear hormone receptor family. NR2 subfamily. As to expression, expressed in pancreas, kidney, small intestine and testis. Weakly expressed in colon. Not expressed in liver, skeletal muscle, lung, placenta, brain, heart, peripheral blood, ovary, prostate, thymus and spleen.

The protein localises to the nucleus. In terms of biological role, transcription factor. Has a lower transcription activation potential than HNF4-alpha. This Homo sapiens (Human) protein is Hepatocyte nuclear factor 4-gamma (HNF4G).